The chain runs to 280 residues: Fructose-1,6-bisphosphatase class 1 (280 aa).

The Mg(2+) site is built by Glu64, Asp83, Leu85, and Asp86. Residues 86 to 89, Tyr189, and Lys220 contribute to the substrate site; that span reads DGSS. Glu226 is a Mg(2+) binding site.

The protein belongs to the FBPase class 1 family. Homotetramer. Mg(2+) serves as cofactor.

It localises to the cytoplasm. The enzyme catalyses beta-D-fructose 1,6-bisphosphate + H2O = beta-D-fructose 6-phosphate + phosphate. Its pathway is carbohydrate biosynthesis; gluconeogenesis. The protein is Fructose-1,6-bisphosphatase class 1 of Campylobacter jejuni (strain RM1221).